We begin with the raw amino-acid sequence, 132 residues long: Small ribosomal subunit protein uS13 (132 aa).

The disordered stretch occupies residues P106–K132. A compositionally biased stretch (basic residues) spans A116–K132.

The protein belongs to the universal ribosomal protein uS13 family. As to quaternary structure, part of the 30S ribosomal subunit. Forms a loose heterodimer with protein S19. Forms two bridges to the 50S subunit in the 70S ribosome.

Its function is as follows. Located at the top of the head of the 30S subunit, it contacts several helices of the 16S rRNA. In the 70S ribosome it contacts the 23S rRNA (bridge B1a) and protein L5 of the 50S subunit (bridge B1b), connecting the 2 subunits; these bridges are implicated in subunit movement. Contacts the tRNAs in the A and P-sites. This is Small ribosomal subunit protein uS13 from Mycoplasmopsis pulmonis (strain UAB CTIP) (Mycoplasma pulmonis).